The following is a 78-amino-acid chain: Acyl carrier protein (78 aa).

The region spanning 2–77 (SDIEQRVKKI…QAIDYVNANL (76 aa)) is the Carrier domain. Serine 37 carries the O-(pantetheine 4'-phosphoryl)serine modification.

This sequence belongs to the acyl carrier protein (ACP) family. In terms of processing, 4'-phosphopantetheine is transferred from CoA to a specific serine of apo-ACP by AcpS. This modification is essential for activity because fatty acids are bound in thioester linkage to the sulfhydryl of the prosthetic group.

It is found in the cytoplasm. The protein operates within lipid metabolism; fatty acid biosynthesis. In terms of biological role, carrier of the growing fatty acid chain in fatty acid biosynthesis. This Methylobacillus flagellatus (strain ATCC 51484 / DSM 6875 / VKM B-1610 / KT) protein is Acyl carrier protein.